The chain runs to 564 residues: Urocanate hydratase (564 aa).

NAD(+)-binding positions include 54-55, Q132, 178-180, E198, R203, 244-245, 269-273, 279-280, and Y328; these read GG, GMG, NA, QTSAH, and YL. Residue C416 is part of the active site. Residue G498 coordinates NAD(+).

The protein belongs to the urocanase family. In terms of assembly, homodimer. Requires NAD(+) as cofactor.

The catalysed reaction is 4-imidazolone-5-propanoate = trans-urocanate + H2O. Its pathway is amino-acid degradation; L-histidine degradation into L-glutamate; N-formimidoyl-L-glutamate from L-histidine: step 2/3. This is Urocanate hydratase from Trifolium repens (Creeping white clover).